The sequence spans 473 residues: tRNA modification GTPase MnmE (473 aa).

Residues Arg-30, Glu-95, and Arg-134 each coordinate (6S)-5-formyl-5,6,7,8-tetrahydrofolate. The region spanning 230 to 394 is the TrmE-type G domain; that stretch reads GVAAVIAGRP…LKSTMAGMVE (165 aa). GTP contacts are provided by residues 240-245, 259-265, and 284-287; these read NAGKST, SHMPGTT, and DTAG. Residues Ser-244 and Thr-265 each coordinate Mg(2+). (6S)-5-formyl-5,6,7,8-tetrahydrofolate is bound at residue Lys-473.

This sequence belongs to the TRAFAC class TrmE-Era-EngA-EngB-Septin-like GTPase superfamily. TrmE GTPase family. Homodimer. Heterotetramer of two MnmE and two MnmG subunits. K(+) is required as a cofactor.

Its subcellular location is the cytoplasm. Functionally, exhibits a very high intrinsic GTPase hydrolysis rate. Involved in the addition of a carboxymethylaminomethyl (cmnm) group at the wobble position (U34) of certain tRNAs, forming tRNA-cmnm(5)s(2)U34. The polypeptide is tRNA modification GTPase MnmE (Chlorobium phaeovibrioides (strain DSM 265 / 1930) (Prosthecochloris vibrioformis (strain DSM 265))).